The primary structure comprises 384 residues: S-adenosylmethionine synthase (384 aa).

Histidine 15 is a binding site for ATP. Aspartate 17 is a Mg(2+) binding site. Glutamate 43 contacts K(+). L-methionine contacts are provided by glutamate 56 and glutamine 99. Residues glutamine 99–arginine 109 form a flexible loop region. Residues aspartate 164–lysine 166, arginine 230–phenylalanine 231, aspartate 239, arginine 245–lysine 246, alanine 262, and lysine 266 each bind ATP. Aspartate 239 contacts L-methionine. Residue lysine 270 coordinates L-methionine.

This sequence belongs to the AdoMet synthase family. As to quaternary structure, homotetramer; dimer of dimers. It depends on Mg(2+) as a cofactor. Requires K(+) as cofactor.

Its subcellular location is the cytoplasm. It carries out the reaction L-methionine + ATP + H2O = S-adenosyl-L-methionine + phosphate + diphosphate. It functions in the pathway amino-acid biosynthesis; S-adenosyl-L-methionine biosynthesis; S-adenosyl-L-methionine from L-methionine: step 1/1. Catalyzes the formation of S-adenosylmethionine (AdoMet) from methionine and ATP. The overall synthetic reaction is composed of two sequential steps, AdoMet formation and the subsequent tripolyphosphate hydrolysis which occurs prior to release of AdoMet from the enzyme. This is S-adenosylmethionine synthase from Citrobacter koseri (strain ATCC BAA-895 / CDC 4225-83 / SGSC4696).